A 207-amino-acid polypeptide reads, in one-letter code: Large ribosomal subunit protein uL4 (207 aa).

The tract at residues 48 to 86 is disordered; that stretch reads THKVKNRSEVRGGGRKPWRQKGTGRARQGSIRSPQWRGG. A compositionally biased stretch (basic residues) spans 60 to 71; it reads GGRKPWRQKGTG.

Belongs to the universal ribosomal protein uL4 family. Part of the 50S ribosomal subunit.

In terms of biological role, one of the primary rRNA binding proteins, this protein initially binds near the 5'-end of the 23S rRNA. It is important during the early stages of 50S assembly. It makes multiple contacts with different domains of the 23S rRNA in the assembled 50S subunit and ribosome. Forms part of the polypeptide exit tunnel. This chain is Large ribosomal subunit protein uL4, found in Bacillus licheniformis (strain ATCC 14580 / DSM 13 / JCM 2505 / CCUG 7422 / NBRC 12200 / NCIMB 9375 / NCTC 10341 / NRRL NRS-1264 / Gibson 46).